A 303-amino-acid chain; its full sequence is UDP-3-O-acyl-N-acetylglucosamine deacetylase (303 aa).

Zn(2+) is bound by residues H78, H237, and D241. H264 serves as the catalytic Proton donor.

The protein belongs to the LpxC family. Zn(2+) is required as a cofactor.

The catalysed reaction is a UDP-3-O-[(3R)-3-hydroxyacyl]-N-acetyl-alpha-D-glucosamine + H2O = a UDP-3-O-[(3R)-3-hydroxyacyl]-alpha-D-glucosamine + acetate. The protein operates within glycolipid biosynthesis; lipid IV(A) biosynthesis; lipid IV(A) from (3R)-3-hydroxytetradecanoyl-[acyl-carrier-protein] and UDP-N-acetyl-alpha-D-glucosamine: step 2/6. Catalyzes the hydrolysis of UDP-3-O-myristoyl-N-acetylglucosamine to form UDP-3-O-myristoylglucosamine and acetate, the committed step in lipid A biosynthesis. The protein is UDP-3-O-acyl-N-acetylglucosamine deacetylase of Pseudomonas syringae pv. tomato (strain ATCC BAA-871 / DC3000).